The primary structure comprises 195 residues: Protein GrpE (195 aa).

A compositionally biased stretch (basic and acidic residues) spans 1-20 (MSSKEQKTPDEQVLDQKEAA). Positions 1–40 (MSSKEQKTPDEQVLDQKEAAKGQQADAAPETADVADPRDE) are disordered.

Belongs to the GrpE family. Homodimer.

The protein resides in the cytoplasm. Functionally, participates actively in the response to hyperosmotic and heat shock by preventing the aggregation of stress-denatured proteins, in association with DnaK and GrpE. It is the nucleotide exchange factor for DnaK and may function as a thermosensor. Unfolded proteins bind initially to DnaJ; upon interaction with the DnaJ-bound protein, DnaK hydrolyzes its bound ATP, resulting in the formation of a stable complex. GrpE releases ADP from DnaK; ATP binding to DnaK triggers the release of the substrate protein, thus completing the reaction cycle. Several rounds of ATP-dependent interactions between DnaJ, DnaK and GrpE are required for fully efficient folding. The polypeptide is Protein GrpE (Pectobacterium atrosepticum (strain SCRI 1043 / ATCC BAA-672) (Erwinia carotovora subsp. atroseptica)).